The following is a 259-amino-acid chain: Hemin import ATP-binding protein HmuV (259 aa).

The 237-residue stretch at 2–238 (IEARDLNVSI…ALLSEVFDCQ (237 aa)) folds into the ABC transporter domain. An ATP-binding site is contributed by 34-41 (GPNGSGKS).

It belongs to the ABC transporter superfamily. Heme (hemin) importer (TC 3.A.1.14.5) family. As to quaternary structure, the complex is composed of two ATP-binding proteins (HmuV), two transmembrane proteins (HmuU) and a solute-binding protein (HmuT).

The protein resides in the cell inner membrane. Part of the ABC transporter complex HmuTUV involved in hemin import. Responsible for energy coupling to the transport system. In Chelativorans sp. (strain BNC1), this protein is Hemin import ATP-binding protein HmuV.